Consider the following 171-residue polypeptide: Large ribosomal subunit protein uL10 (171 aa).

The protein belongs to the universal ribosomal protein uL10 family. As to quaternary structure, part of the ribosomal stalk of the 50S ribosomal subunit. The N-terminus interacts with L11 and the large rRNA to form the base of the stalk. The C-terminus forms an elongated spine to which L12 dimers bind in a sequential fashion forming a multimeric L10(L12)X complex.

Forms part of the ribosomal stalk, playing a central role in the interaction of the ribosome with GTP-bound translation factors. The protein is Large ribosomal subunit protein uL10 of Cereibacter sphaeroides (strain ATCC 17023 / DSM 158 / JCM 6121 / CCUG 31486 / LMG 2827 / NBRC 12203 / NCIMB 8253 / ATH 2.4.1.) (Rhodobacter sphaeroides).